The chain runs to 362 residues: tRNA-specific 2-thiouridylase MnmA (362 aa).

Residues 8–15 (AMSGGVDS) and methionine 35 contribute to the ATP site. Residues 95–97 (NPD) are interaction with target base in tRNA. The active-site Nucleophile is cysteine 100. Cysteine 100 and cysteine 196 are oxidised to a cystine. Glycine 124 contributes to the ATP binding site. The interval 146–148 (KDQ) is interaction with tRNA. Cysteine 196 (cysteine persulfide intermediate) is an active-site residue. Residues 303 to 304 (RY) form an interaction with tRNA region.

This sequence belongs to the MnmA/TRMU family.

It is found in the cytoplasm. It carries out the reaction S-sulfanyl-L-cysteinyl-[protein] + uridine(34) in tRNA + AH2 + ATP = 2-thiouridine(34) in tRNA + L-cysteinyl-[protein] + A + AMP + diphosphate + H(+). Its function is as follows. Catalyzes the 2-thiolation of uridine at the wobble position (U34) of tRNA, leading to the formation of s(2)U34. This is tRNA-specific 2-thiouridylase MnmA from Chlamydia abortus (strain DSM 27085 / S26/3) (Chlamydophila abortus).